Here is a 460-residue protein sequence, read N- to C-terminus: V-type ATP synthase beta chain (460 aa).

It belongs to the ATPase alpha/beta chains family.

In terms of biological role, produces ATP from ADP in the presence of a proton gradient across the membrane. The V-type beta chain is a regulatory subunit. In Anaeromyxobacter sp. (strain Fw109-5), this protein is V-type ATP synthase beta chain.